The chain runs to 221 residues: Octanoyltransferase (221 aa).

In terms of domain architecture, BPL/LPL catalytic spans 35–221; sequence ESYENRIIFC…RELLAALLSK (187 aa). Residues 80–87, 152–154, and 165–167 each bind substrate; these read RGGDITYH, AIG, and GLA. The active-site Acyl-thioester intermediate is the C183.

Belongs to the LipB family.

The protein resides in the cytoplasm. The catalysed reaction is octanoyl-[ACP] + L-lysyl-[protein] = N(6)-octanoyl-L-lysyl-[protein] + holo-[ACP] + H(+). It functions in the pathway protein modification; protein lipoylation via endogenous pathway; protein N(6)-(lipoyl)lysine from octanoyl-[acyl-carrier-protein]: step 1/2. In terms of biological role, catalyzes the transfer of endogenously produced octanoic acid from octanoyl-acyl-carrier-protein onto the lipoyl domains of lipoate-dependent enzymes. Lipoyl-ACP can also act as a substrate although octanoyl-ACP is likely to be the physiological substrate. The sequence is that of Octanoyltransferase from Bacteroides fragilis (strain YCH46).